The chain runs to 346 residues: NADH-ubiquinone oxidoreductase chain 2 (346 aa).

10 consecutive transmembrane segments (helical) span residues 25-45 (HWIL…PLIS), 52-72 (AIEA…LILF), 95-115 (CLIL…HFWF), 124-144 (LITA…LLLM), 149-169 (LNPA…GWMG), 178-196 (ILAF…IIIY), 200-219 (LTIL…FLSL), 247-267 (TLLS…WLII), 274-294 (EMTP…FFYL), and 326-346 (AILT…TTLV).

It belongs to the complex I subunit 2 family.

It localises to the mitochondrion inner membrane. The catalysed reaction is a ubiquinone + NADH + 5 H(+)(in) = a ubiquinol + NAD(+) + 4 H(+)(out). Functionally, core subunit of the mitochondrial membrane respiratory chain NADH dehydrogenase (Complex I) that is believed to belong to the minimal assembly required for catalysis. Complex I functions in the transfer of electrons from NADH to the respiratory chain. The immediate electron acceptor for the enzyme is believed to be ubiquinone. The sequence is that of NADH-ubiquinone oxidoreductase chain 2 (MT-ND2) from Coturnix japonica (Japanese quail).